The sequence spans 89 residues: Antitoxin RelB (89 aa).

The protein belongs to the phD/YefM antitoxin family. Interacts with toxin RelE, which neutralizes its toxicity. Also interacts with toxins RelG and RelK in vitro, in M.smegmatis coexpression with non-cognate toxins neutralizes the toxicity of RelG while increasing the toxicity of RelK.

Its function is as follows. Antitoxin component of a type II toxin-antitoxin (TA) system. Upon expression in M.smegmatis neutralizes the effect of toxin RelE. In terms of biological role, induces its own promoter, in combination with RelE represses its own promoter. Binds DNA in complex with toxin RelE but not alone. The sequence is that of Antitoxin RelB (relB) from Mycobacterium tuberculosis (strain ATCC 25618 / H37Rv).